Consider the following 244-residue polypeptide: HTH-type transcriptional repressor PhnF (244 aa).

Residues 8 to 74 (RILKHQVVRA…RGRTTVVARP (67 aa)) form the HTH gntR-type domain. Residues 35–54 (EREIAEQFEVARETVRQALR) constitute a DNA-binding region (H-T-H motif).

It is found in the cytoplasm. Its function is as follows. Represses the phnDCE operon, involved in the uptake of phosphate, under conditions of phosphate availability in the cell. In Mycolicibacterium smegmatis (strain ATCC 700084 / mc(2)155) (Mycobacterium smegmatis), this protein is HTH-type transcriptional repressor PhnF (phnF).